Here is a 471-residue protein sequence, read N- to C-terminus: Putative multidrug resistance protein MdtD (471 aa).

Over 1-11 the chain is Periplasmic; the sequence is MTDLPDSTRWQ. A helical transmembrane segment spans residues 12-32; sequence LWIVAFGFFMQSLDTTIVNTA. Topologically, residues 33–48 are cytoplasmic; that stretch reads LPSMAQSLGESPLHMH. A helical membrane pass occupies residues 49-69; the sequence is MVIVSYVLTVAVMLPASGWLA. Residues 70–76 are Periplasmic-facing; the sequence is DKVGVRN. The chain crosses the membrane as a helical span at residues 77–97; the sequence is IFFTAIVLFTLGSLFCALSGT. The Cytoplasmic segment spans residues 98–101; sequence LNEL. Residues 102-124 form a helical membrane-spanning segment; the sequence is LLARALQGVGGAMMVPVGRLTVM. Over 125-137 the chain is Periplasmic; that stretch reads KIVPREQYMAAMT. A helical membrane pass occupies residues 138-158; sequence FVTLPGQIGPLLGPALGGLLV. At 159-164 the chain is on the cytoplasmic side; sequence EYASWH. Residues 165–185 traverse the membrane as a helical segment; that stretch reads WIFLINIPVGIIGAIATLMLM. Over 186-196 the chain is Periplasmic; that stretch reads PNYTMQTRRFD. A helical membrane pass occupies residues 197–217; sequence LSGFLLLAVGMAVLTLALDGS. Residues 218–224 lie on the Cytoplasmic side of the membrane; it reads KGTGFSP. A helical membrane pass occupies residues 225-245; it reads LAIAGLVAVGVVALVLYLLHA. Residues 246-262 lie on the Periplasmic side of the membrane; sequence QNNNRALFSLKLFRTRT. The chain crosses the membrane as a helical span at residues 263–283; sequence FSLGLAGSFAGRIGSGMLPFM. Over 284 to 285 the chain is Cytoplasmic; it reads TP. A helical membrane pass occupies residues 286-306; it reads VFLQIGLGFSPFHAGLMMIPM. The Periplasmic portion of the chain corresponds to 307 to 341; that stretch reads VLGSMGMKRIVVQVVNRFGYRWVLVATTLGLSLVT. The chain crosses the membrane as a helical span at residues 342 to 362; that stretch reads LLFMTTALLGWYYVLPFVLFL. Residues 363–395 lie on the Cytoplasmic side of the membrane; that stretch reads QGMVNSTRFSSMNTLTLKDLPDNLASSGNSLLS. The chain crosses the membrane as a helical span at residues 396–416; the sequence is MIMQLSMSIGVTIAGLLLGLF. The Periplasmic segment spans residues 417–430; sequence GSQHVSVDSGTTQT. Residues 431–451 form a helical membrane-spanning segment; that stretch reads VFMYTWLSMAFIIALPAFVFA. Residues 452-471 lie on the Cytoplasmic side of the membrane; it reads RVPSDTHQNVAISRRKRSAQ.

Belongs to the major facilitator superfamily. TCR/Tet family.

It is found in the cell inner membrane. The polypeptide is Putative multidrug resistance protein MdtD (Escherichia coli O81 (strain ED1a)).